Reading from the N-terminus, the 473-residue chain is Catalase easC (473 aa).

Residues 1–15 show a composition bias toward low complexity; that stretch reads MASEVSVASSGSEHS. The tract at residues 1–31 is disordered; sequence MASEVSVASSGSEHSGAQKCPFQDPGLSSMD. H54 is a catalytic residue. A heme-binding site is contributed by Y344. Residues 369-388 form a disordered region; it reads DGARPEKAEMAPQKVPSQEH.

This sequence belongs to the catalase family. Requires heme as cofactor.

Its pathway is alkaloid biosynthesis; ergot alkaloid biosynthesis. In terms of biological role, catalase; part of the gene cluster that mediates the biosynthesis of fungal ergot alkaloid. DmaW catalyzes the first step of ergot alkaloid biosynthesis by condensing dimethylallyl diphosphate (DMAP) and tryptophan to form 4-dimethylallyl-L-tryptophan. The second step is catalyzed by the methyltransferase easF that methylates 4-dimethylallyl-L-tryptophan in the presence of S-adenosyl-L-methionine, resulting in the formation of 4-dimethylallyl-L-abrine. The catalase easC and the FAD-dependent oxidoreductase easE then transform 4-dimethylallyl-L-abrine to chanoclavine-I which is further oxidized by easD in the presence of NAD(+), resulting in the formation of chanoclavine-I aldehyde. Agroclavine dehydrogenase easG then mediates the conversion of chanoclavine-I aldehyde to agroclavine via a non-enzymatic adduct reaction: the substrate is an iminium intermediate that is formed spontaneously from chanoclavine-I aldehyde in the presence of glutathione. The presence of easA is not required to complete this reaction. Further conversion of agroclavine to paspalic acid is a two-step process involving oxidation of agroclavine to elymoclavine and of elymoclavine to paspalic acid, the second step being performed by the elymoclavine oxidase cloA. Paspalic acid is then further converted to D-lysergic acid. Ergopeptines are assembled from D-lysergic acid and three different amino acids by the D-lysergyl-peptide-synthetases composed each of a monomudular and a trimodular nonribosomal peptide synthetase subunit. LpsB and lpsC encode the monomodular subunits responsible for D-lysergic acid activation and incorporation into the ergopeptine backbone. LpsA1 and A2 subunits encode the trimodular nonribosomal peptide synthetase assembling the tripeptide portion of ergopeptines. LpsA1 is responsible for formation of the major ergopeptine, ergotamine, and lpsA2 for alpha-ergocryptine, the minor ergopeptine of the total alkaloid mixture elaborated by C.purpurea. D-lysergyl-tripeptides are assembled by the nonribosomal peptide synthetases and released as N-(D-lysergyl-aminoacyl)-lactams. Cyclolization of the D-lysergyl-tripeptides is performed by the Fe(2+)/2-ketoglutarate-dependent dioxygenase easH which introduces a hydroxyl group into N-(D-lysergyl-aminoacyl)-lactam at alpha-C of the aminoacyl residue followed by spontaneous condensation with the terminal lactam carbonyl group. The polypeptide is Catalase easC (Claviceps purpurea (Ergot fungus)).